A 368-amino-acid chain; its full sequence is Spore germination protein B2 (368 aa).

The next 10 membrane-spanning stretches (helical) occupy residues 10-30, 43-63, 82-102, 120-140, 145-165, 187-207, 217-237, 282-302, 308-328, and 338-358; these read FMQT…LTLP, LMIL…LPFL, FIGF…VCFQ, MAVV…GGVY, VYAY…MFSF, LFPK…LVPF, AVAL…LIVI, FACM…IFHL, AWLL…PKDL, and LGYA…LSWI.

It belongs to the amino acid-polyamine-organocation (APC) superfamily. Spore germination protein (SGP) (TC 2.A.3.9) family.

The protein localises to the cell membrane. Involved in the response to the germinative mixture of L-asparagine, glucose, fructose and potassium ions (AGFK). Could be an amino acid transporter. Cannot stimulate germination in the absence of gerD and gerK gene products (fructose and glucose receptors, respectively). The polypeptide is Spore germination protein B2 (gerBB) (Bacillus subtilis (strain 168)).